A 295-amino-acid polypeptide reads, in one-letter code: Light-independent protochlorophyllide reductase iron-sulfur ATP-binding protein (295 aa).

Residues 10–15 and Lys-39 contribute to the ATP site; that span reads GIGKST. Ser-14 serves as a coordination point for Mg(2+). Cys-95 and Cys-129 together coordinate [4Fe-4S] cluster. 180–181 contributes to the ATP binding site; that stretch reads NR. A compositionally biased stretch (basic and acidic residues) spans 275-289; it reads TKDKKENKKEDKENS. Positions 275–295 are disordered; sequence TKDKKENKKEDKENSADFTWL.

This sequence belongs to the NifH/BchL/ChlL family. As to quaternary structure, homodimer. Protochlorophyllide reductase is composed of three subunits; ChlL, ChlN and ChlB. Requires [4Fe-4S] cluster as cofactor.

It is found in the plastid. The protein resides in the chloroplast. The catalysed reaction is chlorophyllide a + oxidized 2[4Fe-4S]-[ferredoxin] + 2 ADP + 2 phosphate = protochlorophyllide a + reduced 2[4Fe-4S]-[ferredoxin] + 2 ATP + 2 H2O. It functions in the pathway porphyrin-containing compound metabolism; chlorophyll biosynthesis (light-independent). In terms of biological role, component of the dark-operative protochlorophyllide reductase (DPOR) that uses Mg-ATP and reduced ferredoxin to reduce ring D of protochlorophyllide (Pchlide) to form chlorophyllide a (Chlide). This reaction is light-independent. The L component serves as a unique electron donor to the NB-component of the complex, and binds Mg-ATP. This Physcomitrium patens (Spreading-leaved earth moss) protein is Light-independent protochlorophyllide reductase iron-sulfur ATP-binding protein.